A 313-amino-acid chain; its full sequence is 4-hydroxy-3-methylbut-2-enyl diphosphate reductase (313 aa).

Cys-12 provides a ligand contact to [4Fe-4S] cluster. (2E)-4-hydroxy-3-methylbut-2-enyl diphosphate contacts are provided by His-41 and His-74. 2 residues coordinate dimethylallyl diphosphate: His-41 and His-74. Positions 41 and 74 each coordinate isopentenyl diphosphate. [4Fe-4S] cluster is bound at residue Cys-96. Residue His-124 participates in (2E)-4-hydroxy-3-methylbut-2-enyl diphosphate binding. Residue His-124 participates in dimethylallyl diphosphate binding. His-124 contacts isopentenyl diphosphate. The active-site Proton donor is Glu-126. Thr-167 lines the (2E)-4-hydroxy-3-methylbut-2-enyl diphosphate pocket. Position 197 (Cys-197) interacts with [4Fe-4S] cluster. Positions 225, 226, 227, and 269 each coordinate (2E)-4-hydroxy-3-methylbut-2-enyl diphosphate. Residues Ser-225, Ser-226, Asn-227, and Ser-269 each coordinate dimethylallyl diphosphate. Positions 225, 226, 227, and 269 each coordinate isopentenyl diphosphate.

This sequence belongs to the IspH family. [4Fe-4S] cluster is required as a cofactor.

It catalyses the reaction isopentenyl diphosphate + 2 oxidized [2Fe-2S]-[ferredoxin] + H2O = (2E)-4-hydroxy-3-methylbut-2-enyl diphosphate + 2 reduced [2Fe-2S]-[ferredoxin] + 2 H(+). The catalysed reaction is dimethylallyl diphosphate + 2 oxidized [2Fe-2S]-[ferredoxin] + H2O = (2E)-4-hydroxy-3-methylbut-2-enyl diphosphate + 2 reduced [2Fe-2S]-[ferredoxin] + 2 H(+). It participates in isoprenoid biosynthesis; dimethylallyl diphosphate biosynthesis; dimethylallyl diphosphate from (2E)-4-hydroxy-3-methylbutenyl diphosphate: step 1/1. The protein operates within isoprenoid biosynthesis; isopentenyl diphosphate biosynthesis via DXP pathway; isopentenyl diphosphate from 1-deoxy-D-xylulose 5-phosphate: step 6/6. Functionally, catalyzes the conversion of 1-hydroxy-2-methyl-2-(E)-butenyl 4-diphosphate (HMBPP) into a mixture of isopentenyl diphosphate (IPP) and dimethylallyl diphosphate (DMAPP). Acts in the terminal step of the DOXP/MEP pathway for isoprenoid precursor biosynthesis. This is 4-hydroxy-3-methylbut-2-enyl diphosphate reductase from Baumannia cicadellinicola subsp. Homalodisca coagulata.